A 285-amino-acid polypeptide reads, in one-letter code: Xanthoxin dehydrogenase (285 aa).

An N-acetylserine modification is found at serine 2.

The protein belongs to the short-chain dehydrogenases/reductases (SDR) family. Predominantly in roots and stems, and at lower levels in leaves and seeds.

The protein resides in the cytoplasm. It carries out the reaction 2-cis,4-trans-xanthoxin + NAD(+) = 2-cis-(+)-abscisic aldehyde + NADH + H(+). It catalyses the reaction 2-trans,4-trans-xanthoxin + NAD(+) = 2-trans-(+)-abscisic aldehyde + NADH + H(+). In terms of biological role, involved in the biosynthesis of abscisic acid. Catalyzes the conversion of xanthoxin to abscisic aldehyde. This Arabidopsis thaliana (Mouse-ear cress) protein is Xanthoxin dehydrogenase.